The sequence spans 107 residues: MDWRAAEDLACDFLKKKGYRILERNYRTKYGEIDIIARCGKETVFVEVKSGRGKVDPLERIDMKKVRNIEKAAKLYMLQKGLKGPVRVDFVRVTPKGIDHFEGLWLG.

Belongs to the UPF0102 family.

The polypeptide is UPF0102 protein CTN_0433 (Thermotoga neapolitana (strain ATCC 49049 / DSM 4359 / NBRC 107923 / NS-E)).